A 469-amino-acid polypeptide reads, in one-letter code: Calcium-binding mitochondrial carrier protein SCaMC-2 (469 aa).

The Mitochondrial intermembrane portion of the chain corresponds to 1-189; sequence MLCLCLYVPL…ERQTGMWWRH (189 aa). EF-hand domains are found at residues 47-80, 78-113, and 114-149; these read TYRQWKQKIVQAGDKDLDGQLDFEEFVHYLQDHE, DHEKKLRLVFKSLDKKNDGRIDAQEIMQSLRDLGVK, and ISEQQAEKILKSMDKNGTMTIDWNEWRDYHLLHPVE. Ca(2+)-binding residues include Asp60, Asp62, Asp64, Gln66, and Glu71. Solcar repeat units lie at residues 184–270, 278–363, and 375–463; these read GMWW…IKRL, LRIH…LKNA, and PGVF…LKIT. Residues 190 to 207 traverse the membrane as a helical segment; that stretch reads LVAGGGAGAVSRTCTAPL. The Mitochondrial matrix portion of the chain corresponds to 208–244; sequence DRLKVLMQVHASRSNNMCIVGGFTQMIREGGARSLWR. The helical transmembrane segment at 245 to 264 threads the bilayer; it reads GNGINVLKIAPESAIKFMAY. The Mitochondrial intermembrane portion of the chain corresponds to 265-287; that stretch reads EQIKRLIGSDQETLRIHERLVAG. A helical membrane pass occupies residues 288-301; the sequence is SLAGAIAQSSIYPM. Residues 302 to 337 lie on the Mitochondrial matrix side of the membrane; that stretch reads EVLKTRMALRKTGQYSGMLDCARKILAREGMAAFYK. Residues 338 to 357 traverse the membrane as a helical segment; that stretch reads GYVPNMLGIIPYAGIDLAVY. Topologically, residues 358 to 380 are mitochondrial intermembrane; it reads ETLKNAWLQRYAVNSADPGVFVL. Residues 381–398 form a helical membrane-spanning segment; it reads LACGTMSSTCGQLASYPL. The Mitochondrial matrix segment spans residues 399 to 437; the sequence is ALVRTRMQAQASMEGAPEVTMSSLFKQILRTEGAFGLYR. The helical transmembrane segment at 438–457 threads the bilayer; it reads GLAPNFMKVIPAVSISYVVY. Over 458-469 the chain is Mitochondrial intermembrane; it reads ENLKITLGVQSR.

Belongs to the mitochondrial carrier (TC 2.A.29) family.

It is found in the mitochondrion inner membrane. Functionally, calcium-dependent mitochondrial solute carrier. Mitochondrial solute carriers shuttle metabolites, nucleotides, and cofactors through the mitochondrial inner membrane. May act as a ATP-Mg/Pi exchanger that mediates the transport of Mg-ATP in exchange for phosphate, catalyzing the net uptake or efflux of adenine nucleotides into or from the mitochondria. The polypeptide is Calcium-binding mitochondrial carrier protein SCaMC-2 (SLC25A25) (Bos taurus (Bovine)).